A 488-amino-acid chain; its full sequence is Phenylalanine--tRNA ligase alpha subunit (488 aa).

Residues T315, 354–356, F394, and F419 contribute to the L-phenylalanine site; that span reads QLD.

It belongs to the class-II aminoacyl-tRNA synthetase family. Phe-tRNA synthetase alpha subunit type 2 subfamily. As to quaternary structure, tetramer of two alpha and two beta subunits. It depends on Mg(2+) as a cofactor.

It is found in the cytoplasm. It catalyses the reaction tRNA(Phe) + L-phenylalanine + ATP = L-phenylalanyl-tRNA(Phe) + AMP + diphosphate + H(+). In Pyrobaculum arsenaticum (strain DSM 13514 / JCM 11321 / PZ6), this protein is Phenylalanine--tRNA ligase alpha subunit.